The sequence spans 197 residues: A-type ATP synthase subunit E 2 (197 aa).

This sequence belongs to the V-ATPase E subunit family. As to quaternary structure, has multiple subunits with at least A(3), B(3), C, D, E, F, H, I and proteolipid K(x).

The protein localises to the cell membrane. Component of the A-type ATP synthase that produces ATP from ADP in the presence of a proton gradient across the membrane. The chain is A-type ATP synthase subunit E 2 from Methanospirillum hungatei JF-1 (strain ATCC 27890 / DSM 864 / NBRC 100397 / JF-1).